The sequence spans 238 residues: MSQSLIVALDFPGKQEVEQFLHHFEGEELFVKVGMELFYKEGPAIITYLKEKGHKIFLDLKLHDIPNTVKSAMRSLASLDVDMVNVHAAGGSSMMKAAIEGLEEGKQEGKERPICIAVTQLTSTSEAMMKKEIGIEKTLEEAVAHYAKLTKDSGLDGVVCSTLEVPKLREVCGNEFVTVTPGIRLASDDVNDQVRVATPKRARELGSSYIVVGRSITKAENPLEAYKTVKQQWEGVTV.

Substrate-binding positions include aspartate 10, lysine 32, 59 to 68, threonine 122, arginine 184, glutamine 193, glycine 213, and arginine 214; that span reads DLKLHDIPNT. Lysine 61 (proton donor) is an active-site residue.

The protein belongs to the OMP decarboxylase family. Type 1 subfamily. In terms of assembly, homodimer.

It catalyses the reaction orotidine 5'-phosphate + H(+) = UMP + CO2. It participates in pyrimidine metabolism; UMP biosynthesis via de novo pathway; UMP from orotate: step 2/2. Catalyzes the decarboxylation of orotidine 5'-monophosphate (OMP) to uridine 5'-monophosphate (UMP). The sequence is that of Orotidine 5'-phosphate decarboxylase from Bacillus cereus (strain G9842).